The primary structure comprises 50 residues: Mast cell degranulating peptide (50 aa).

An N-terminal signal peptide occupies residues 1–27 (MISMLRCTFFFVSVILITSYFVTPTMS). K29 carries the post-translational modification N6-formyllysine. C30 and C42 are joined by a disulfide. 2 positions are modified to N6-formyllysine: K44 and K48. N49 bears the Asparagine amide mark.

Expressed by the venom gland.

It localises to the secreted. In terms of biological role, potent anti-inflammatory agent. At low concentrations, mediates the degranulation of mast cells thus evoking an inflammatory response. Also acts as a neurotoxin capable of blocking a class of voltage-gated potassium channels. This Apis cerana cerana (Oriental honeybee) protein is Mast cell degranulating peptide.